Reading from the N-terminus, the 538-residue chain is ATP synthase subunit beta 2 (538 aa).

Over residues 1–10 the composition is skewed to polar residues; the sequence is MADPQATNGT. The segment at 1 to 30 is disordered; it reads MADPQATNGTGAACAERDASDVGDVSDVGD. Residue 185–192 coordinates ATP; the sequence is GGAGVGKT. Residues 494–505 show a composition bias toward basic and acidic residues; sequence AAAREADARREA. The disordered stretch occupies residues 494–538; sequence AAAREADARREAAAAASVAGPGTTSGTTSDPASGSAEPQGARHGR. The span at 506–529 shows a compositional bias: low complexity; the sequence is AAAASVAGPGTTSGTTSDPASGSA.

This sequence belongs to the ATPase alpha/beta chains family. F-type ATPases have 2 components, CF(1) - the catalytic core - and CF(0) - the membrane proton channel. CF(1) has five subunits: alpha(3), beta(3), gamma(1), delta(1), epsilon(1). CF(0) has three main subunits: a(1), b(2) and c(9-12). The alpha and beta chains form an alternating ring which encloses part of the gamma chain. CF(1) is attached to CF(0) by a central stalk formed by the gamma and epsilon chains, while a peripheral stalk is formed by the delta and b chains.

It localises to the cell inner membrane. The enzyme catalyses ATP + H2O + 4 H(+)(in) = ADP + phosphate + 5 H(+)(out). In terms of biological role, produces ATP from ADP in the presence of a proton gradient across the membrane. The catalytic sites are hosted primarily by the beta subunits. In Burkholderia pseudomallei (strain K96243), this protein is ATP synthase subunit beta 2.